We begin with the raw amino-acid sequence, 254 residues long: Cytochrome c oxidase subunit 2 (254 aa).

At 12-38 the chain is on the mitochondrial intermembrane side; it reads DAPEPWQICYQDSATKIMSGIDKLTGE. A helical membrane pass occupies residues 39-59; sequence IFYYETLLLIIVGWVLISAII. Residues 60–73 are Mitochondrial matrix-facing; sequence KYTKTELSYKYFNH. A helical transmembrane segment spans residues 74–94; sequence GTLIEILWTCSPAFILIAISF. The Mitochondrial intermembrane segment spans residues 95–248; sequence PSFKLLYLMD…KYLEWLNIHL (154 aa). Cu cation-binding residues include His182, Cys217, Glu219, Cys221, His225, and Met228. Glu219 contributes to the Mg(2+) binding site.

Belongs to the cytochrome c oxidase subunit 2 family. As to quaternary structure, component of the cytochrome c oxidase (complex IV, CIV), a multisubunit enzyme composed of a catalytic core of 3 subunits and several supernumerary subunits. The complex exists as a monomer or a dimer and forms supercomplexes (SCs) in the inner mitochondrial membrane with ubiquinol-cytochrome c oxidoreductase (cytochrome b-c1 complex, complex III, CIII). The cofactor is Cu cation.

It is found in the mitochondrion inner membrane. The catalysed reaction is 4 Fe(II)-[cytochrome c] + O2 + 8 H(+)(in) = 4 Fe(III)-[cytochrome c] + 2 H2O + 4 H(+)(out). Its function is as follows. Component of the cytochrome c oxidase, the last enzyme in the mitochondrial electron transport chain which drives oxidative phosphorylation. The respiratory chain contains 3 multisubunit complexes succinate dehydrogenase (complex II, CII), ubiquinol-cytochrome c oxidoreductase (cytochrome b-c1 complex, complex III, CIII) and cytochrome c oxidase (complex IV, CIV), that cooperate to transfer electrons derived from NADH and succinate to molecular oxygen, creating an electrochemical gradient over the inner membrane that drives transmembrane transport and the ATP synthase. Cytochrome c oxidase is the component of the respiratory chain that catalyzes the reduction of oxygen to water. Electrons originating from reduced cytochrome c in the intermembrane space (IMS) are transferred via the dinuclear copper A center (CU(A)) of subunit 2 and heme A of subunit 1 to the active site in subunit 1, a binuclear center (BNC) formed by heme A3 and copper B (CU(B)). The BNC reduces molecular oxygen to 2 water molecules using 4 electrons from cytochrome c in the IMS and 4 protons from the mitochondrial matrix. The polypeptide is Cytochrome c oxidase subunit 2 (Zancudomyces culisetae (Gut fungus)).